The primary structure comprises 1194 residues: F-box only protein 38 (1194 aa).

One can recognise an F-box domain in the interval 30 to 75; that stretch reads MNQLSHEVLCHIFRYLPLQDIMCMECLSRKLKEAVTLYLRVVRVVD. The tract at residues 59-119 is interaction with KLF7; that stretch reads KLKEAVTLYL…LHPRYLERRR (61 aa). Short sequence motifs (nuclear export signal) lie at residues 194 to 201, 307 to 316, and 451 to 460; these read LHLVGVNV, LEVDLGYLII, and LLPSLEFISL. Disordered stretches follow at residues 487–529, 577–776, 793–879, and 896–915; these read ALVS…FRPD, EEQA…DAES, RTGR…RARS, and KPCHAMKRKRTADKSTSTSD. Over residues 493-510 the composition is skewed to low complexity; it reads NSNNDNDNNAPNNNANLH. At Thr-592 the chain carries Phosphothreonine. A phosphoserine mark is found at Ser-599, Ser-601, and Ser-607. A compositionally biased stretch (acidic residues) spans 599-609; the sequence is SESDDEEDSLE. 2 stretches are compositionally biased toward basic and acidic residues: residues 622–631 and 683–701; these read RYSEREEKTG and IKADMKAARDVSEKKKSKD. Residues 705–728 are compositionally biased toward low complexity; sequence SCSSSSSSTAASTAGNASSPSTAS. Phosphoserine is present on residues Ser-742 and Ser-746. Over residues 764–774 the composition is skewed to acidic residues; sequence EDSEAMEEGDA. The segment covering 793-804 has biased composition (basic and acidic residues); sequence RTGRCSDEERPS. A compositionally biased stretch (polar residues) spans 855–867; the sequence is SSQPESCDVQSNE. Residues 896 to 906 show a composition bias toward basic residues; sequence KPCHAMKRKRT. Residues 902-905 carry the Nuclear localization signal motif; that stretch reads KRKR.

As to quaternary structure, part of the SCF (SKP1-CUL1-F-box) E3 ubiquitin-protein ligase complex SCF(FBXO38) composed of CUL1, SKP1, RBX1 and FBXO38. Interacts with KLF7. Interacts with PDCD1/PD-1. Expressed at high levels in embryo (developing brain, spinal cord, branchial arms and limbs). Widely expressed at low levels in adult tissues, with highest expression in testis. Expressed in postmeiotic spermatids.

Its subcellular location is the cytoplasm. It is found in the cytosol. It localises to the nucleus. The protein operates within protein modification; protein ubiquitination. Its function is as follows. Substrate recognition component of a SCF (SKP1-CUL1-F-box protein) E3 ubiquitin-protein ligase complex which mediates the ubiquitination and subsequent proteasomal degradation of PDCD1/PD-1, thereby regulating T-cells-mediated immunity. Required for anti-tumor activity of T-cells by promoting the degradation of PDCD1/PD-1; the PDCD1-mediated inhibitory pathway being exploited by tumors to attenuate anti-tumor immunity and facilitate tumor survival. May indirectly stimulate the activity of transcription factor KLF7, a regulator of neuronal differentiation, without promoting KLF7 ubiquitination. This chain is F-box only protein 38, found in Mus musculus (Mouse).